Consider the following 339-residue polypeptide: Transcription initiation factor IIB (339 aa).

The TFIIB-type zinc finger occupies 39 to 70 (EELICPMCGSKNIIKDYERAEIVCETCGCVLQ). The Zn(2+) site is built by Cys43, Cys46, Cys62, and Cys65. Repeat copies occupy residues 156-239 (SELD…SREL) and 250-331 (DYVP…ELTE).

It belongs to the TFIIB family.

Its function is as follows. Stabilizes TBP binding to an archaeal box-A promoter. Also responsible for recruiting RNA polymerase II to the pre-initiation complex (DNA-TBP-TFIIB). The protein is Transcription initiation factor IIB of Methanothermococcus thermolithotrophicus (Methanococcus thermolithotrophicus).